Here is an 85-residue protein sequence, read N- to C-terminus: uncharacterized protein (85 aa).

Residues 1–21 form the signal peptide; sequence MRPLLCALAGLALLCAVGALA. A compositionally biased stretch (basic and acidic residues) spans 22–35; it reads DGREDRGSPGDTGE. Residues 22 to 85 are disordered; sequence DGREDRGSPG…EVVHLPGSTL (64 aa). The segment covering 36 to 51 has biased composition (low complexity); it reads RPAGPARGPGLEPARG.

Its subcellular location is the secreted. This is an uncharacterized protein from Homo sapiens (Human).